The primary structure comprises 466 residues: Asparagine--tRNA ligase (466 aa).

The protein belongs to the class-II aminoacyl-tRNA synthetase family. Homodimer.

It localises to the cytoplasm. It catalyses the reaction tRNA(Asn) + L-asparagine + ATP = L-asparaginyl-tRNA(Asn) + AMP + diphosphate + H(+). The sequence is that of Asparagine--tRNA ligase from Photobacterium profundum (strain SS9).